Reading from the N-terminus, the 369-residue chain is Anhydro-N-acetylmuramic acid kinase (369 aa).

12–19 (GTSLDGVD) contacts ATP.

Belongs to the anhydro-N-acetylmuramic acid kinase family.

It carries out the reaction 1,6-anhydro-N-acetyl-beta-muramate + ATP + H2O = N-acetyl-D-muramate 6-phosphate + ADP + H(+). It functions in the pathway amino-sugar metabolism; 1,6-anhydro-N-acetylmuramate degradation. The protein operates within cell wall biogenesis; peptidoglycan recycling. In terms of biological role, catalyzes the specific phosphorylation of 1,6-anhydro-N-acetylmuramic acid (anhMurNAc) with the simultaneous cleavage of the 1,6-anhydro ring, generating MurNAc-6-P. Is required for the utilization of anhMurNAc either imported from the medium or derived from its own cell wall murein, and thus plays a role in cell wall recycling. This is Anhydro-N-acetylmuramic acid kinase from Shigella flexneri serotype 5b (strain 8401).